Consider the following 111-residue polypeptide: ATP-dependent Clp protease adapter protein ClpS (111 aa).

It belongs to the ClpS family. Binds to the N-terminal domain of the chaperone ClpA.

Its function is as follows. Involved in the modulation of the specificity of the ClpAP-mediated ATP-dependent protein degradation. This is ATP-dependent Clp protease adapter protein ClpS from Corynebacterium aurimucosum (strain ATCC 700975 / DSM 44827 / CIP 107346 / CN-1) (Corynebacterium nigricans).